The sequence spans 193 residues: MISPRIMFTRRSAPYWATFLVIVLAALWLLWIGREPICTCGSVKLWHGETMSSESSQHIADWYTPSHVIHGLVFYAALWLVAPRLSFGWRLAIATLVESAWEIVENSDAIIERYRAVTISLDYYGDSVLNSVSDILAMVLGFVLAARLPVWASVAIVIGFEALTTWLIRDGLALNVLMLLWPLEAVRGWQAAL.

4 consecutive transmembrane segments (helical) span residues 13–33 (APYW…LWIG), 62–82 (WYTP…WLVA), 148–168 (LPVW…TWLI), and 172–192 (LALN…WQAA).

This sequence belongs to the UPF0314 family.

It localises to the cell membrane. The protein is UPF0314 protein Pden_1914 of Paracoccus denitrificans (strain Pd 1222).